Consider the following 893-residue polypeptide: TBC domain-containing protein kinase-like protein (893 aa).

The Protein kinase domain maps to 1 to 273 (MFPLKDAEMG…PDQLMKDKVF (273 aa)). Positions 466–651 (DIPPLMRGLT…HLWDTLLLGN (186 aa)) constitute a Rab-GAP TBC domain. Positions 710–749 (YRQHAQPPKPSSDSSGGRSSAPYFSAECPDPPKTDLSRES) are disordered. A compositionally biased stretch (low complexity) spans 720-729 (SSDSSGGRSS). Positions 790 to 889 (SKPKLLVVDI…IKPTGLLTIP (100 aa)) constitute a Rhodanese domain.

It belongs to the protein kinase superfamily. In terms of assembly, component of the FERRY complex composed of five subunits, TBCK, PPP1R21, FERRY3, CRYZL1 and GATD1 with a ratio of 1:2:1:2:4, respectively.

It localises to the cytoplasm. It is found in the cytoskeleton. The protein localises to the spindle. Its subcellular location is the midbody. The protein resides in the early endosome. Component of the FERRY complex (Five-subunit Endosomal Rab5 and RNA/ribosome intermediary). The FERRY complex directly interacts with mRNAs and RAB5A, and functions as a RAB5A effector involved in the localization and the distribution of specific mRNAs most likely by mediating their endosomal transport. The complex recruits mRNAs and ribosomes to early endosomes through direct mRNA-interaction. Also involved in the modulation of mTOR signaling and expression of mTOR complex components. Involved in the control of actin-cytoskeleton organization. The polypeptide is TBC domain-containing protein kinase-like protein (Homo sapiens (Human)).